Consider the following 83-residue polypeptide: Ardiscretin (83 aa).

An N-terminal signal peptide occupies residues 1 to 20; that stretch reads MKGMIMLISCLMLIDVVVES. The LCN-type CS-alpha/beta domain maps to 21–82; it reads KNGYIIEPKG…IFDYYNNKCG (62 aa). 4 cysteine pairs are disulfide-bonded: Cys-31–Cys-81, Cys-35–Cys-57, Cys-43–Cys-62, and Cys-47–Cys-64. Cys-81 carries the cysteine amide modification.

Expressed by the venom gland.

It localises to the secreted. Functionally, inhibits the sodium (Nav) currents in an apparent irreversible manner. Produces small depolarization and induces repetitive firing in squid axons. Is specific for arthropods (crickets, triatomides, crabs and squids), but is non-toxic to mice. Shows antibacterial activity against both Gram-positive and Gram-negative bacteria. The sequence is that of Ardiscretin from Tityus discrepans (Venezuelan scorpion).